We begin with the raw amino-acid sequence, 477 residues long: Alanine--glyoxylate aminotransferase 2 homolog 2, mitochondrial (477 aa).

A mitochondrion-targeting transit peptide spans 1 to 22 (MQRFAAKRSVQNISVSLWRRCI). Pyridoxal 5'-phosphate is bound by residues 165–166 (GT), Tyr192, and 292–295 (DEVQ). Position 321 is an N6-(pyridoxal phosphate)lysine (Lys321). Thr350 is a pyridoxal 5'-phosphate binding site.

The protein belongs to the class-III pyridoxal-phosphate-dependent aminotransferase family. In terms of assembly, homotetramer. Interacts with GRF3. It depends on pyridoxal 5'-phosphate as a cofactor.

The protein resides in the mitochondrion. The catalysed reaction is glyoxylate + L-alanine = glycine + pyruvate. This is Alanine--glyoxylate aminotransferase 2 homolog 2, mitochondrial (AGT3) from Arabidopsis thaliana (Mouse-ear cress).